We begin with the raw amino-acid sequence, 332 residues long: Flotillin-like protein FloA (332 aa).

A run of 2 helical transmembrane segments spans residues 6 to 26 and 28 to 48; these read LGYL…FSFV and VGLW…YMIG.

This sequence belongs to the flotillin-like FloA family. Homooligomerizes.

The protein resides in the cell membrane. It localises to the membrane raft. Its function is as follows. Found in functional membrane microdomains (FMM) that may be equivalent to eukaryotic membrane rafts. FMMs are highly dynamic and increase in number as cells age. Flotillins are thought to be important factors in membrane fluidity. In Symbiobacterium thermophilum (strain DSM 24528 / JCM 14929 / IAM 14863 / T), this protein is Flotillin-like protein FloA.